The following is a 77-amino-acid chain: Translation initiation factor IF-1, chloroplastic (77 aa).

One can recognise an S1-like domain in the interval 1–71 (MKEQKWIHEG…TRGRIIYRLR (71 aa)).

Belongs to the IF-1 family. Component of the 30S ribosomal translation pre-initiation complex which assembles on the 30S ribosome in the order IF-2 and IF-3, IF-1 and N-formylmethionyl-tRNA(fMet); mRNA recruitment can occur at any time during PIC assembly.

Its subcellular location is the plastid. The protein resides in the chloroplast. Its function is as follows. One of the essential components for the initiation of protein synthesis. Stabilizes the binding of IF-2 and IF-3 on the 30S subunit to which N-formylmethionyl-tRNA(fMet) subsequently binds. Helps modulate mRNA selection, yielding the 30S pre-initiation complex (PIC). Upon addition of the 50S ribosomal subunit IF-1, IF-2 and IF-3 are released leaving the mature 70S translation initiation complex. This Spinacia oleracea (Spinach) protein is Translation initiation factor IF-1, chloroplastic.